We begin with the raw amino-acid sequence, 144 residues long: Large ribosomal subunit protein uL15 (144 aa).

The segment at 1 to 53 (MFLNTIKPGEGAKHAKRRVGRGIGSGLGKTAGRGHKGQKSRSGGFHKVGFEGG) is disordered. Gly residues predominate over residues 21–31 (RGIGSGLGKTA).

This sequence belongs to the universal ribosomal protein uL15 family. Part of the 50S ribosomal subunit.

Binds to the 23S rRNA. The chain is Large ribosomal subunit protein uL15 from Laribacter hongkongensis (strain HLHK9).